Here is a 323-residue protein sequence, read N- to C-terminus: Isoeugenol synthase 1 (323 aa).

NADP(+) contacts are provided by residues 14–17 (TGYL), 36–47 (VMPLKKNSDDSK), 88–90 (VPQ), 113–115 (SEF), lysine 135, and 155–157 (NSL). Lysine 135 serves as the catalytic Proton donor/acceptor.

The protein belongs to the NmrA-type oxidoreductase family. In terms of tissue distribution, expressed in flowers, especially in corolla and tubes of petals, probably in both epidermal and mesophyll cell layers.

The enzyme catalyses (E)-isoeugenol + acetate + NADP(+) = (E)-coniferyl acetate + NADPH. The protein operates within aromatic compound metabolism; phenylpropanoid biosynthesis. With respect to regulation, inhibited by zinc and copper ions. Repressed by 4-bromo-cinnamyl acetate. Its function is as follows. Involved in the biosynthesis of the floral volatile isoeugenol. Catalyzes the synthesis of the phenylpropene isoeugenol from coniferyl acetate. Phenylpropenes are the primary constituents of various essential plant oils. They are produced as antimicrobial and antianimal compounds, or as floral attractants of pollinators. Isoeugenol is a characteristic aromatic constituent of spices and a floral volatile compound. The sequence is that of Isoeugenol synthase 1 from Petunia hybrida (Petunia).